A 372-amino-acid chain; its full sequence is Chaperone protein DnaJ (372 aa).

The J domain maps to 5-70 (DYYDVLGVER…QKRANYDQYG (66 aa)). A CR-type zinc finger spans residues 130–208 (GTTKDIQINT…CHGDGRVHKK (79 aa)). Zn(2+) contacts are provided by Cys-143, Cys-146, Cys-160, Cys-163, Cys-182, Cys-185, Cys-196, and Cys-199. CXXCXGXG motif repeat units lie at residues 143–150 (CDSCDGSG), 160–167 (CSTCHGAG), 182–189 (CPSCHGSG), and 196–203 (CKSCHGDG).

Belongs to the DnaJ family. As to quaternary structure, homodimer. Zn(2+) is required as a cofactor.

The protein localises to the cytoplasm. Functionally, participates actively in the response to hyperosmotic and heat shock by preventing the aggregation of stress-denatured proteins and by disaggregating proteins, also in an autonomous, DnaK-independent fashion. Unfolded proteins bind initially to DnaJ; upon interaction with the DnaJ-bound protein, DnaK hydrolyzes its bound ATP, resulting in the formation of a stable complex. GrpE releases ADP from DnaK; ATP binding to DnaK triggers the release of the substrate protein, thus completing the reaction cycle. Several rounds of ATP-dependent interactions between DnaJ, DnaK and GrpE are required for fully efficient folding. Also involved, together with DnaK and GrpE, in the DNA replication of plasmids through activation of initiation proteins. This is Chaperone protein DnaJ from Pasteurella multocida (strain Pm70).